The following is a 141-amino-acid chain: Large ribosomal subunit protein uL14m (141 aa).

Residues 1–19 constitute a mitochondrion transit peptide; the sequence is MALSLSGLILPKLMQQRAF.

Belongs to the universal ribosomal protein uL14 family. As to quaternary structure, component of the mitochondrial ribosome large subunit (39S) which comprises a 16S rRNA and about 50 distinct proteins. Interacts with MALSU1.

The protein localises to the mitochondrion. Its function is as follows. May form part of 2 intersubunit bridges in the assembled ribosome. Upon binding to MALSU1, intersubunit bridge formation is blocked, preventing ribosome formation and repressing translation. In Danio rerio (Zebrafish), this protein is Large ribosomal subunit protein uL14m (mrpl14).